The sequence spans 144 residues: Maximins 3/H2 (144 aa).

The signal sequence occupies residues 1–18 (MNFKYIVAVSFLIASAYA). 2 consecutive propeptides follow at residues 19–43 (RSVQ…REIR) and 74–123 (TAEE…KEKR). I143 bears the Isoleucine amide mark.

Belongs to the bombinin family. Expressed by the skin glands.

It is found in the secreted. Functionally, maximin-3 shows antibacterial activity against both Gram-positive and Gram-negative bacteria. It also shows antimicrobial activity against the fungus C.albicans, but not against A.flavus nor P.uticale. It has little hemolytic activity. It possess a significant cytotoxicity against tumor cell lines. It possess a significant anti-HIV activity. It shows high spermicidal activity. Its function is as follows. Maximin-H2 shows antibacterial activity against both Gram-positive and Gram-negative bacteria. It also shows antimicrobial activity against the fungus C.albicans. Shows strong hemolytic activity. This is Maximins 3/H2 from Bombina maxima (Giant fire-bellied toad).